A 242-amino-acid polypeptide reads, in one-letter code: Venom redulysin 2 (242 aa).

The N-terminal stretch at 1-19 (MSKIWILLLLVGAVQFARG) is a signal peptide. A propeptide spanning residues 20–46 (FPALEEEQEDDVIDWPSFEYDLSDEER) is cleaved from the precursor.

This sequence belongs to the redulysin-like family. In terms of processing, contains 5 disulfide bonds. As to expression, expressed by the venom gland (posterior main gland) (at protein level).

The protein resides in the secreted. Highly abundant protein that may be responsible for the observed disruption of sensory neuron membranes, since it is homologous to proteins such as trialysin, which forms pores in lipid bilayers. Probable insecticidal toxin. The polypeptide is Venom redulysin 2 (Platymeris rhadamanthus (Red spot assassin bug)).